The sequence spans 417 residues: Tryptophan synthase beta chain (417 aa).

An N6-(pyridoxal phosphate)lysine modification is found at Lys110.

Belongs to the TrpB family. In terms of assembly, tetramer of two alpha and two beta chains. Pyridoxal 5'-phosphate serves as cofactor.

The enzyme catalyses (1S,2R)-1-C-(indol-3-yl)glycerol 3-phosphate + L-serine = D-glyceraldehyde 3-phosphate + L-tryptophan + H2O. It functions in the pathway amino-acid biosynthesis; L-tryptophan biosynthesis; L-tryptophan from chorismate: step 5/5. In terms of biological role, the beta subunit is responsible for the synthesis of L-tryptophan from indole and L-serine. The sequence is that of Tryptophan synthase beta chain from Prochlorococcus marinus (strain NATL2A).